A 379-amino-acid polypeptide reads, in one-letter code: Flagellar P-ring protein (379 aa).

A signal peptide spans 1 to 32 (MTAPAGFLPRVGRLIAVALTAVFLLAPTGAEA).

It belongs to the FlgI family. As to quaternary structure, the basal body constitutes a major portion of the flagellar organelle and consists of four rings (L,P,S, and M) mounted on a central rod.

The protein localises to the periplasm. It is found in the bacterial flagellum basal body. Its function is as follows. Assembles around the rod to form the L-ring and probably protects the motor/basal body from shearing forces during rotation. The chain is Flagellar P-ring protein from Rhodospirillum rubrum (strain ATCC 11170 / ATH 1.1.1 / DSM 467 / LMG 4362 / NCIMB 8255 / S1).